A 395-amino-acid chain; its full sequence is Elongation factor Tu (395 aa).

The region spanning 10–204 (KPHLNIGTIG…TVDNYIKEPI (195 aa)) is the tr-type G domain. Residues 19–26 (GHVDHGKT) form a G1 region. Residue 19–26 (GHVDHGKT) participates in GTP binding. Residue T26 participates in Mg(2+) binding. The tract at residues 60–64 (GITIN) is G2. Residues 81–84 (DCPG) are G3. GTP-binding positions include 81 to 85 (DCPGH) and 136 to 139 (NKVD). Residues 136 to 139 (NKVD) are G4. Positions 174 to 176 (SAL) are G5.

The protein belongs to the TRAFAC class translation factor GTPase superfamily. Classic translation factor GTPase family. EF-Tu/EF-1A subfamily. As to quaternary structure, monomer.

Its subcellular location is the cytoplasm. The enzyme catalyses GTP + H2O = GDP + phosphate + H(+). Functionally, GTP hydrolase that promotes the GTP-dependent binding of aminoacyl-tRNA to the A-site of ribosomes during protein biosynthesis. In Karelsulcia muelleri (strain GWSS) (Sulcia muelleri), this protein is Elongation factor Tu.